Here is a 207-residue protein sequence, read N- to C-terminus: B2 protein (207 aa).

A disordered region spans residues 1–68; sequence MIDQEESNFN…FKTLPPAESL (68 aa). 2 stretches are compositionally biased toward low complexity: residues 8–26 and 35–52; these read NFNF…QFHG and KNNN…GENK. The DCD domain occupies 72–204; the sequence is ETVGGYIFVC…AISLLDIFEE (133 aa).

The polypeptide is B2 protein (Daucus carota (Wild carrot)).